The chain runs to 446 residues: Phosphoglucosamine mutase (446 aa).

Ser-102 functions as the Phosphoserine intermediate in the catalytic mechanism. Residues Ser-102, Asp-241, Asp-243, and Asp-245 each contribute to the Mg(2+) site. At Ser-102 the chain carries Phosphoserine.

The protein belongs to the phosphohexose mutase family. Mg(2+) serves as cofactor. Activated by phosphorylation.

The enzyme catalyses alpha-D-glucosamine 1-phosphate = D-glucosamine 6-phosphate. Its function is as follows. Catalyzes the conversion of glucosamine-6-phosphate to glucosamine-1-phosphate. This Xylella fastidiosa (strain M12) protein is Phosphoglucosamine mutase.